The following is a 379-amino-acid chain: Lipid-A-disaccharide synthase (379 aa).

It belongs to the LpxB family.

It catalyses the reaction a lipid X + a UDP-2-N,3-O-bis[(3R)-3-hydroxyacyl]-alpha-D-glucosamine = a lipid A disaccharide + UDP + H(+). It participates in bacterial outer membrane biogenesis; LPS lipid A biosynthesis. Its function is as follows. Condensation of UDP-2,3-diacylglucosamine and 2,3-diacylglucosamine-1-phosphate to form lipid A disaccharide, a precursor of lipid A, a phosphorylated glycolipid that anchors the lipopolysaccharide to the outer membrane of the cell. The protein is Lipid-A-disaccharide synthase of Vibrio campbellii (strain ATCC BAA-1116).